The sequence spans 523 residues: (R)-citramalate synthase (523 aa).

Residues 6–272 form the Pyruvate carboxyltransferase domain; sequence VEVLDTTLRD…KGNESLKKLK (267 aa).

The protein belongs to the alpha-IPM synthase/homocitrate synthase family.

It catalyses the reaction pyruvate + acetyl-CoA + H2O = (3R)-citramalate + CoA + H(+). It functions in the pathway amino-acid biosynthesis; L-isoleucine biosynthesis; 2-oxobutanoate from pyruvate: step 1/3. With respect to regulation, inhibited by isoleucine. Catalyzes the condensation of pyruvate and acetyl-coenzyme A to form (R)-citramalate. Makes part of a pathway for isoleucine biosynthesis, i.e. the citramalate-dependent pathway. Also displays a low alpha-isopropylmalate synthase activity, using 2-oxoisovalerate as substrate, but is unable to use 2-oxoglutarate. This chain is (R)-citramalate synthase, found in Sulfolobus acidocaldarius (strain ATCC 33909 / DSM 639 / JCM 8929 / NBRC 15157 / NCIMB 11770).